Reading from the N-terminus, the 261-residue chain is 5'-nucleotidase SurE (261 aa).

Residues Asp8, Asp9, Ser43, and Asn96 each coordinate a divalent metal cation.

Belongs to the SurE nucleotidase family. It depends on a divalent metal cation as a cofactor.

It localises to the cytoplasm. The catalysed reaction is a ribonucleoside 5'-phosphate + H2O = a ribonucleoside + phosphate. Nucleotidase that shows phosphatase activity on nucleoside 5'-monophosphates. This is 5'-nucleotidase SurE from Cereibacter sphaeroides (strain ATCC 17029 / ATH 2.4.9) (Rhodobacter sphaeroides).